We begin with the raw amino-acid sequence, 472 residues long: Argininosuccinate lyase (472 aa).

It belongs to the lyase 1 family. Argininosuccinate lyase subfamily.

Its subcellular location is the cytoplasm. It carries out the reaction 2-(N(omega)-L-arginino)succinate = fumarate + L-arginine. It participates in amino-acid biosynthesis; L-arginine biosynthesis; L-arginine from L-ornithine and carbamoyl phosphate: step 3/3. In Mycolicibacterium paratuberculosis (strain ATCC BAA-968 / K-10) (Mycobacterium paratuberculosis), this protein is Argininosuccinate lyase.